Here is a 350-residue protein sequence, read N- to C-terminus: TLC domain-containing protein fld-1 (350 aa).

The chain crosses the membrane as a helical span at residues 9–29 (TDLLGPVPTMFLWVIVSFAFF). The segment at 65–100 (GQEAENTENPPENEAEAGEQVEQEPEPDSRDLSAIP) is disordered. Residues 75–90 (PENEAEAGEQVEQEPE) show a composition bias toward acidic residues. The region spanning 102 to 279 (NKKWRISNEC…IINGLVIASL (178 aa)) is the TLC domain. A run of 6 helical transmembrane segments spans residues 111-131 (CVSLFHSVISGLWAAYALLYY), 145-165 (VAINLVLMSAGYLFHDLVDLL), 173-193 (IIELLFHHVVVLSAFAVTMFF), 195-215 (RFLGVVVFGLLMELNSIFLHS), 229-249 (PSFRIIALLNMVTLFAFRLCV), and 270-292 (IINGLVIASLASTNTVLTYRLLA).

In terms of tissue distribution, ubiquitously expressed.

Its subcellular location is the cell membrane. Its function is as follows. Regulates the composition and fluidity of the plasma membrane. Inhibits the incorporation of membrane-fluidizing phospholipids containing omega-3 long-chain polyunsaturated fatty acids (LCPUFA) and thereby promotes membrane rigidity. Does not appear to have any effect on LCPUFA synthesis. The chain is TLC domain-containing protein fld-1 from Caenorhabditis elegans.